The sequence spans 499 residues: L-asparagine permease (499 aa).

Transmembrane regions (helical) follow at residues 34–54 (QVQM…GAGA), 58–78 (MAGP…FFIL), 109–129 (VAGW…ITAV), 146–166 (VFAL…VKWF), 171–191 (FWFA…GTVF), 219–239 (LLPA…IEMV), 264–284 (IGLF…WSAY), 298–318 (LGVP…ALSS), 353–373 (YAGI…NYLV), 378–398 (FEIV…FIIV), 422–442 (APFT…LMAF), and 448–468 (TYTI…WFGV).

This sequence belongs to the amino acid-polyamine-organocation (APC) superfamily. Amino acid transporter (AAT) (TC 2.A.3.1) family.

The protein localises to the cell inner membrane. This is L-asparagine permease (ansP) from Escherichia coli (strain K12).